Consider the following 34-residue polypeptide: NU-buthitoxin-Ptr1a (34 aa).

3 disulfides stabilise this stretch: cysteine 6–cysteine 27, cysteine 12–cysteine 32, and cysteine 16–cysteine 34.

As to expression, expressed by the venom gland.

The protein resides in the secreted. Functionally, toxin that acts as an agonist on melanocortin receptors (MC1R, MC3R, MC5R, MC5R). After binding to MC1R, the peptide activates the hMC1R/Gs pathway, but after binding to MC4R, it is not able to activate or antagonize the MC4R/Gs pathway. Inhibits melanocyte stimulating hormone (MSH)-binding to human receptors (Ki=2.9 uM to MC1R, Ki=3.9 uM to MC3R, Ki=2.6 uM to MC4R, Ki=2.2 uM to MC5R). This toxin is structurally unrelated to the natural agonists. This is NU-buthitoxin-Ptr1a from Parabuthus transvaalicus (Transvaal thick-tailed scorpion).